Reading from the N-terminus, the 141-residue chain is Large ribosomal subunit protein uL11 (141 aa).

This sequence belongs to the universal ribosomal protein uL11 family. In terms of assembly, part of the ribosomal stalk of the 50S ribosomal subunit. Interacts with L10 and the large rRNA to form the base of the stalk. L10 forms an elongated spine to which L12 dimers bind in a sequential fashion forming a multimeric L10(L12)X complex. In terms of processing, one or more lysine residues are methylated.

Its function is as follows. Forms part of the ribosomal stalk which helps the ribosome interact with GTP-bound translation factors. This Clostridium novyi (strain NT) protein is Large ribosomal subunit protein uL11.